The primary structure comprises 263 residues: Fibroblast growth factor 23 (263 aa).

The N-terminal stretch at 1–23 (MDVNRRIGVKDALLALLLALLQG) is a signal peptide. Cys-103 and Cys-121 are oxidised to a cystine. N-linked (GlcNAc...) asparagine glycosylation is present at Asn-124. The segment covering 198 to 211 (VGRAEEGSDSRALQ) has biased composition (basic and acidic residues). Residues 198–263 (VGRAEEGSDS…GSPRSSGTVG (66 aa)) are disordered. Over residues 212–226 (EDDADLEVETEVEVG) the composition is skewed to acidic residues. The span at 227 to 245 (DDGRNASRERLQAPSDHDP) shows a compositional bias: basic and acidic residues. An N-linked (GlcNAc...) asparagine glycan is attached at Asn-231. The segment covering 249–263 (FSSNPGSPRSSGTVG) has biased composition (polar residues).

The protein belongs to the heparin-binding growth factors family.

The protein resides in the secreted. The polypeptide is Fibroblast growth factor 23 (fgf23) (Tetraodon nigroviridis (Spotted green pufferfish)).